The chain runs to 215 residues: Large ribosomal subunit protein uL16m (215 aa).

A mitochondrion-targeting transit peptide spans 1 to 36 (MALQQYNKFPFFFSGILGPTRLNGLQMPPIQTMVRW).

Belongs to the universal ribosomal protein uL16 family. As to quaternary structure, component of the mitochondrial large ribosomal subunit (mt-LSU). Mature yeast 74S mitochondrial ribosomes consist of a small (37S) and a large (54S) subunit. The 37S small subunit contains a 15S ribosomal RNA (15S mt-rRNA) and at least 32 different proteins. The 54S large subunit contains a 21S rRNA (21S mt-rRNA) and at least 45 different proteins.

It is found in the mitochondrion. In terms of biological role, component of the mitochondrial ribosome (mitoribosome), a dedicated translation machinery responsible for the synthesis of mitochondrial genome-encoded proteins, including at least some of the essential transmembrane subunits of the mitochondrial respiratory chain. The mitoribosomes are attached to the mitochondrial inner membrane and translation products are cotranslationally integrated into the membrane. This is Large ribosomal subunit protein uL16m (mrpl16) from Schizosaccharomyces pombe (strain 972 / ATCC 24843) (Fission yeast).